Here is a 271-residue protein sequence, read N- to C-terminus: Uridine-cytidine kinase 1-A (271 aa).

An ATP-binding site is contributed by 24–32 (GGTASGKST). Substrate contacts are provided by D81, Y109, H114, R163, R172, and Q180. An ATP-binding site is contributed by D209. The tract at residues 241 to 271 (SQKRTFPGQGESGGLILPGKRTHLESSSRPH) is disordered. A compositionally biased stretch (basic and acidic residues) spans 262 to 271 (THLESSSRPH).

The protein belongs to the uridine kinase family.

The enzyme catalyses uridine + ATP = UMP + ADP + H(+). It carries out the reaction cytidine + ATP = CMP + ADP + H(+). The protein operates within pyrimidine metabolism; CTP biosynthesis via salvage pathway; CTP from cytidine: step 1/3. Its pathway is pyrimidine metabolism; UMP biosynthesis via salvage pathway; UMP from uridine: step 1/1. In terms of biological role, phosphorylates uridine and cytidine to uridine monophosphate and cytidine monophosphate. Does not phosphorylate deoxyribonucleosides or purine ribonucleosides. Can use ATP or GTP as a phosphate donor. This chain is Uridine-cytidine kinase 1-A (uck1-a), found in Xenopus laevis (African clawed frog).